The sequence spans 421 residues: UDP-N-acetylglucosamine 1-carboxyvinyltransferase (421 aa).

Lys22 to Asn23 serves as a coordination point for phosphoenolpyruvate. Residue Arg93 participates in UDP-N-acetyl-alpha-D-glucosamine binding. The Proton donor role is filled by Cys117. At Cys117 the chain carries 2-(S-cysteinyl)pyruvic acid O-phosphothioketal. UDP-N-acetyl-alpha-D-glucosamine is bound by residues Arg122–Leu126, Asp308, and Ile330.

Belongs to the EPSP synthase family. MurA subfamily.

It localises to the cytoplasm. The catalysed reaction is phosphoenolpyruvate + UDP-N-acetyl-alpha-D-glucosamine = UDP-N-acetyl-3-O-(1-carboxyvinyl)-alpha-D-glucosamine + phosphate. It functions in the pathway cell wall biogenesis; peptidoglycan biosynthesis. Cell wall formation. Adds enolpyruvyl to UDP-N-acetylglucosamine. The protein is UDP-N-acetylglucosamine 1-carboxyvinyltransferase of Pseudomonas syringae pv. tomato (strain ATCC BAA-871 / DC3000).